The sequence spans 1412 residues: Ecdysone-induced protein 75B, isoform B (1412 aa).

A compositionally biased stretch (low complexity) spans 1-14 (MEAVQAAAAATSSG). 4 disordered regions span residues 1 to 96 (MEAV…PGGT), 110 to 204 (QRAT…QQHV), 258 to 298 (QYQQ…VPPP), and 321 to 448 (HFQQ…SIPD). Positions 15 to 25 (GSSGSVPGSGS) are enriched in gly residues. Over residues 32–57 (IKTEPIDFEMLHLEENERQQDIEREP) the composition is skewed to basic and acidic residues. A compositionally biased stretch (low complexity) spans 58 to 68 (SSSNSNSNSNS). Positions 69–81 (LTPQRYTHVQVQT) are enriched in polar residues. The span at 87–96 (PTGLTTPGGT) shows a compositional bias: low complexity. The span at 124–133 (YSQQQGTAAS) shows a compositional bias: polar residues. The segment covering 135 to 150 (SAPPETTALLTTTSGT) has biased composition (low complexity). A compositionally biased stretch (polar residues) spans 151-164 (PQIIITRTLPSNQH). Over residues 177–203 (HHYQQQQPQRQQSPPPLHHQQQQQQQH) the composition is skewed to low complexity. Residues 266 to 284 (PLAPPPPPPPPPPPPPPPQ) show a composition bias toward pro residues. Low complexity-rich tracts occupy residues 323–371 (QQQQ…SSHI), 378–403 (SSSSSSNMHHQQQQQQQQSSLGNSVM), and 417–447 (ASSSSSGNSSSSNTNNSSSSSNGEEPSSSIP). The segment at residues 455–531 (TVLCRVCGDK…VGMSRDAVRF (77 aa)) is a DNA-binding region (nuclear receptor). 2 consecutive NR C4-type zinc fingers follow at residues 458-478 (CRVCGDKASGFHYGVHSCEGC) and 495-514 (CTKNQQCSILRINRNRCQYC). An NR LBD domain is found at 565–813 (DQPRLLAAVL…QQMWSMEDGN (249 aa)). 6 disordered regions span residues 837–878 (KSPL…SALA), 984–1021 (LDSPTDSGIESGNEKNECKAVSSGGSSSCSSPRSSVDD), 1044–1064 (VSVSPVRSPQPSTSSHLKRQI), 1108–1174 (AEAD…SSHS), 1204–1317 (ENST…SNSA), and 1368–1401 (VTVTASNGGPPSAAASPAPSSSPPASVGSPNPGL). 5 stretches are compositionally biased toward low complexity: residues 854-866 (GSPSSSQPQGVSL), 1005-1017 (SSGGSSSCSSPRS), 1044-1058 (VSVSPVRSPQPSTSS), 1110-1155 (ADAS…AQSQ), and 1163-1174 (SSPKASMASSHS). 2 stretches are compositionally biased toward polar residues: residues 1206–1219 (STAASSTTNGVGNR) and 1231–1253 (AVQNQQRWGSSSVITTTCQQRQQ). Composition is skewed to low complexity over residues 1254-1290 (SVSPHSNGSSSSSSSSSSSSSSSSSTSSNCSSSSASS), 1299-1317 (STSNGTSAPASSSSGSNSA), and 1372-1400 (ASNGGPPSAAASPAPSSSPPASVGSPNPG).

This sequence belongs to the nuclear hormone receptor family. NR1 subfamily.

It is found in the nucleus. In terms of biological role, implicated in the regulation of ecdysone-triggered gene hierarchies. Probably plays a key role in mediating the regulation of the larval molt by 20-OH-ecdysone. The polypeptide is Ecdysone-induced protein 75B, isoform B (Eip75B) (Drosophila melanogaster (Fruit fly)).